A 65-amino-acid polypeptide reads, in one-letter code: DNA-directed RNA polymerase subunit Rpo10 (65 aa).

Residues C7, C10, C44, and C45 each contribute to the Zn(2+) site.

The protein belongs to the archaeal Rpo10/eukaryotic RPB10 RNA polymerase subunit family. As to quaternary structure, part of the RNA polymerase complex. Zn(2+) serves as cofactor.

It is found in the cytoplasm. It catalyses the reaction RNA(n) + a ribonucleoside 5'-triphosphate = RNA(n+1) + diphosphate. Functionally, DNA-dependent RNA polymerase (RNAP) catalyzes the transcription of DNA into RNA using the four ribonucleoside triphosphates as substrates. In Pyrobaculum arsenaticum (strain DSM 13514 / JCM 11321 / PZ6), this protein is DNA-directed RNA polymerase subunit Rpo10.